A 205-amino-acid chain; its full sequence is Protein TGAM_1450 (205 aa).

One can recognise an AMMECR1 domain in the interval Glu7 to Arg201.

The sequence is that of Protein TGAM_1450 from Thermococcus gammatolerans (strain DSM 15229 / JCM 11827 / EJ3).